Here is a 455-residue protein sequence, read N- to C-terminus: Ribulose bisphosphate carboxylase large chain (455 aa).

N6,N6,N6-trimethyllysine is present on lysine 5. Residues asparagine 114 and threonine 164 each contribute to the substrate site. Catalysis depends on lysine 166, which acts as the Proton acceptor. Residue lysine 168 participates in substrate binding. Mg(2+) is bound by residues lysine 192, aspartate 194, and glutamate 195. The residue at position 192 (lysine 192) is an N6-carboxylysine. Residue histidine 285 is the Proton acceptor of the active site. Positions 286, 318, and 370 each coordinate substrate.

The protein belongs to the RuBisCO large chain family. Type I subfamily. Heterohexadecamer of 8 large chains and 8 small chains; disulfide-linked. The disulfide link is formed within the large subunit homodimers. It depends on Mg(2+) as a cofactor. The disulfide bond which can form in the large chain dimeric partners within the hexadecamer appears to be associated with oxidative stress and protein turnover.

It is found in the plastid. Its subcellular location is the chloroplast. It catalyses the reaction 2 (2R)-3-phosphoglycerate + 2 H(+) = D-ribulose 1,5-bisphosphate + CO2 + H2O. The catalysed reaction is D-ribulose 1,5-bisphosphate + O2 = 2-phosphoglycolate + (2R)-3-phosphoglycerate + 2 H(+). Functionally, ruBisCO catalyzes two reactions: the carboxylation of D-ribulose 1,5-bisphosphate, the primary event in carbon dioxide fixation, as well as the oxidative fragmentation of the pentose substrate in the photorespiration process. Both reactions occur simultaneously and in competition at the same active site. The chain is Ribulose bisphosphate carboxylase large chain from Lupinus microcarpus var. densiflorus (Whitewhorl lupine).